The sequence spans 116 residues: U16-barytoxin-Tl1a (116 aa).

The signal sequence occupies residues 1 to 20 (MKTIIVFLSLLVLATKFGDA). A propeptide spanning residues 21–74 (KEGVNQKQKKEVTQNEFREEYLNEMAAMSLVQQLEAIERALFENEAGRNSRQKR) is cleaved from the precursor. Cystine bridges form between cysteine 75–cysteine 90, cysteine 82–cysteine 95, and cysteine 89–cysteine 110.

The protein belongs to the neurotoxin 14 (magi-1) family. 06 (ICK-Trit) subfamily. Expressed by the venom gland.

The protein localises to the secreted. Ion channel inhibitor. The chain is U16-barytoxin-Tl1a from Trittame loki (Brush-footed trapdoor spider).